The primary structure comprises 124 residues: Small ribosomal subunit protein uS12 (124 aa).

The tract at residues 9 to 28 is disordered; that stretch reads RTERQTLSRKTKSPALRSCP. Aspartate 89 bears the 3-methylthioaspartic acid mark. The interval 104–124 is disordered; the sequence is TAGVKDRRQSRSKYGAKAPKE.

The protein belongs to the universal ribosomal protein uS12 family. Part of the 30S ribosomal subunit. Contacts proteins S8 and S17. May interact with IF1 in the 30S initiation complex.

Functionally, with S4 and S5 plays an important role in translational accuracy. Its function is as follows. Interacts with and stabilizes bases of the 16S rRNA that are involved in tRNA selection in the A site and with the mRNA backbone. Located at the interface of the 30S and 50S subunits, it traverses the body of the 30S subunit contacting proteins on the other side and probably holding the rRNA structure together. The combined cluster of proteins S8, S12 and S17 appears to hold together the shoulder and platform of the 30S subunit. The sequence is that of Small ribosomal subunit protein uS12 from Synechococcus sp. (strain RCC307).